We begin with the raw amino-acid sequence, 368 residues long: 3-dehydroquinate synthase (368 aa).

Residues 69 to 74 (DGEAYK), 103 to 107 (GVIGD), 127 to 128 (TT), Lys140, and Lys149 each bind NAD(+). 3 residues coordinate Zn(2+): Glu182, His245, and His262.

This sequence belongs to the sugar phosphate cyclases superfamily. Dehydroquinate synthase family. The cofactor is Co(2+). Zn(2+) serves as cofactor. It depends on NAD(+) as a cofactor.

The protein resides in the cytoplasm. The catalysed reaction is 7-phospho-2-dehydro-3-deoxy-D-arabino-heptonate = 3-dehydroquinate + phosphate. It functions in the pathway metabolic intermediate biosynthesis; chorismate biosynthesis; chorismate from D-erythrose 4-phosphate and phosphoenolpyruvate: step 2/7. Catalyzes the conversion of 3-deoxy-D-arabino-heptulosonate 7-phosphate (DAHP) to dehydroquinate (DHQ). The sequence is that of 3-dehydroquinate synthase from Pseudomonas aeruginosa (strain UCBPP-PA14).